Consider the following 204-residue polypeptide: Histone chaperone ASF1A (204 aa).

The interaction with histone H3, CHAF1B, and HIRA stretch occupies residues 1-156; sequence MAKVQVNNVV…TRFHINWEDN (156 aa). The Required for interaction with HIRA motif lies at 31–37; that stretch reads IEDLSED. The interval 155-204 is required for interaction with HIRA; the sequence is DNTEKLEDAESSNPNLQSLLSTDALPSASKGWSTSENSLNVMLESHMDCM. A Phosphoserine modification is found at Ser192.

This sequence belongs to the ASF1 family. Interacts with histone H3 (via C-terminus), including histone H3.1, H3.2 and H3.3, and histone H4; the interaction with H3 is direct. Probably interacts with the heterodimeric form of H3-H4 taking the place of the second dimer. Interacts with the CHAF1A, CHAF1B and RBBP4 subunits of the CAF-1 complex. Interacts with CABIN1, HAT1, HIRA, NASP, TAF1 and UBN1. Found in a soluble complex with NASP and histones H3 and H4; the interaction with NASP is probably indirect and mediated by H3-H4. Interacts with CDAN1. Found in a cytosolic complex with IPO4 and histones H3 and H4. Interacts with CREBBP. Phosphorylated by TLK1 and TLK2. Highly phosphorylated in S-phase and at lower levels in M-phase. TLK2-mediated phosphorylation at Ser-192 prevents proteasome-dependent degradation. Phosphorylation at Ser-192 by PRKDC in response to DNA damage promotes the histone chaperone activity and ability to replace histones at double-strand breaks (DSBs) at stalled or collapsed replication forks, leading to RAD51 recruitment.

It is found in the nucleus. It localises to the chromosome. In terms of biological role, histone chaperone that facilitates histone deposition and histone exchange and removal during nucleosome assembly and disassembly. Cooperates with chromatin assembly factor 1 (CAF-1) to promote replication-dependent chromatin assembly and with HIRA to promote replication-independent chromatin assembly. Promotes homologous recombination-mediated repair of double-strand breaks (DSBs) at stalled or collapsed replication forks: acts by mediating histone replacement at DSBs, leading to recruitment of the MMS22L-TONSL complex and subsequent loading of RAD51. Also involved in the nuclear import of the histone H3-H4 dimer together with importin-4 (IPO4): specifically recognizes and binds newly synthesized histones with the monomethylation of H3 'Lys-9' and acetylation at 'Lys-14' (H3K9me1K14ac) marks, and diacetylation at 'Lys-5' and 'Lys-12' of H4 (H4K5K12ac) marks in the cytosol. Required for the formation of senescence-associated heterochromatin foci (SAHF) and efficient senescence-associated cell cycle exit. In Mus musculus (Mouse), this protein is Histone chaperone ASF1A.